A 181-amino-acid chain; its full sequence is Acireductone dioxygenase (181 aa).

4 residues coordinate Fe(2+): H97, H99, E103, and H141. Ni(2+) is bound by residues H97, H99, E103, and H141.

Belongs to the acireductone dioxygenase (ARD) family. As to quaternary structure, monomer. Fe(2+) serves as cofactor. Ni(2+) is required as a cofactor.

The enzyme catalyses 1,2-dihydroxy-5-(methylsulfanyl)pent-1-en-3-one + O2 = 3-(methylsulfanyl)propanoate + CO + formate + 2 H(+). The catalysed reaction is 1,2-dihydroxy-5-(methylsulfanyl)pent-1-en-3-one + O2 = 4-methylsulfanyl-2-oxobutanoate + formate + 2 H(+). The protein operates within amino-acid biosynthesis; L-methionine biosynthesis via salvage pathway; L-methionine from S-methyl-5-thio-alpha-D-ribose 1-phosphate: step 5/6. Catalyzes 2 different reactions between oxygen and the acireductone 1,2-dihydroxy-3-keto-5-methylthiopentene (DHK-MTPene) depending upon the metal bound in the active site. Fe-containing acireductone dioxygenase (Fe-ARD) produces formate and 2-keto-4-methylthiobutyrate (KMTB), the alpha-ketoacid precursor of methionine in the methionine recycle pathway. Ni-containing acireductone dioxygenase (Ni-ARD) produces methylthiopropionate, carbon monoxide and formate, and does not lie on the methionine recycle pathway. The protein is Acireductone dioxygenase of Pseudomonas paraeruginosa (strain DSM 24068 / PA7) (Pseudomonas aeruginosa (strain PA7)).